A 210-amino-acid polypeptide reads, in one-letter code: MTNLNYQQTHFVMSAPDIRHLPSDCGIEVAFAGRSNAGKSSALNTLTNQKSLARTSKTPGRTQLINLFEVVDGKRLVDLPGYGYAEVPEEMKRKWQRALGEYLEKRQSLQGLVVLMDIRHPLKDLDQQMIQWAVESNIQVLVLLTKADKLASGARKAQLNMVREAVLAFNGDVQVEAFSSLKKQGVDKLRQKLDSWFSELAPVEEIQDGE.

The 175-residue stretch at 25-199 (CGIEVAFAGR…RQKLDSWFSE (175 aa)) folds into the EngB-type G domain. GTP-binding positions include 33 to 40 (GRSNAGKS), 60 to 64 (GRTQL), 78 to 81 (DLPG), 145 to 148 (TKAD), and 178 to 180 (FSS). S40 and T62 together coordinate Mg(2+).

This sequence belongs to the TRAFAC class TrmE-Era-EngA-EngB-Septin-like GTPase superfamily. EngB GTPase family. It depends on Mg(2+) as a cofactor.

In terms of biological role, necessary for normal cell division and for the maintenance of normal septation. This Salmonella agona (strain SL483) protein is Probable GTP-binding protein EngB.